Here is a 125-residue protein sequence, read N- to C-terminus: Mini-ribonuclease 3 (125 aa).

Aspartate 11 is an active-site residue.

The protein belongs to the MrnC RNase family. Homodimer. Requires Mg(2+) as cofactor.

It localises to the cytoplasm. Functionally, involved in correct processing of both the 5' and 3' ends of 23S rRNA precursor. Processes 30S rRNA precursor transcript even in absence of ribonuclease 3 (Rnc); Rnc processes 30S rRNA into smaller rRNA precursors. The chain is Mini-ribonuclease 3 from Acholeplasma laidlawii (strain PG-8A).